The sequence spans 384 residues: S-adenosylmethionine synthase (384 aa).

H15 contributes to the ATP binding site. D17 is a binding site for Mg(2+). E43 contacts K(+). L-methionine is bound by residues E56 and Q99. The interval 99-109 (QSPDINQGVDR) is flexible loop. ATP contacts are provided by residues 164-166 (DAK), 230-231 (RF), D239, 245-246 (RK), A262, and K266. L-methionine is bound at residue D239. Residue K270 participates in L-methionine binding.

The protein belongs to the AdoMet synthase family. Homotetramer; dimer of dimers. Mg(2+) serves as cofactor. It depends on K(+) as a cofactor.

Its subcellular location is the cytoplasm. It carries out the reaction L-methionine + ATP + H2O = S-adenosyl-L-methionine + phosphate + diphosphate. It functions in the pathway amino-acid biosynthesis; S-adenosyl-L-methionine biosynthesis; S-adenosyl-L-methionine from L-methionine: step 1/1. Functionally, catalyzes the formation of S-adenosylmethionine (AdoMet) from methionine and ATP. The overall synthetic reaction is composed of two sequential steps, AdoMet formation and the subsequent tripolyphosphate hydrolysis which occurs prior to release of AdoMet from the enzyme. The chain is S-adenosylmethionine synthase from Citrobacter koseri (strain ATCC BAA-895 / CDC 4225-83 / SGSC4696).